Consider the following 637-residue polypeptide: 1-deoxy-D-xylulose-5-phosphate synthase (637 aa).

Thiamine diphosphate contacts are provided by residues His76 and 117–119; that span reads GHS. Asp148 contacts Mg(2+). Thiamine diphosphate-binding positions include 149–150, Asn177, Tyr294, and Glu381; that span reads GA. Asn177 is a binding site for Mg(2+).

Belongs to the transketolase family. DXPS subfamily. In terms of assembly, homodimer. Requires Mg(2+) as cofactor. Thiamine diphosphate is required as a cofactor.

It catalyses the reaction D-glyceraldehyde 3-phosphate + pyruvate + H(+) = 1-deoxy-D-xylulose 5-phosphate + CO2. It functions in the pathway metabolic intermediate biosynthesis; 1-deoxy-D-xylulose 5-phosphate biosynthesis; 1-deoxy-D-xylulose 5-phosphate from D-glyceraldehyde 3-phosphate and pyruvate: step 1/1. Functionally, catalyzes the acyloin condensation reaction between C atoms 2 and 3 of pyruvate and glyceraldehyde 3-phosphate to yield 1-deoxy-D-xylulose-5-phosphate (DXP). This chain is 1-deoxy-D-xylulose-5-phosphate synthase, found in Neisseria meningitidis serogroup C / serotype 2a (strain ATCC 700532 / DSM 15464 / FAM18).